Reading from the N-terminus, the 244-residue chain is Signal recognition particle receptor subunit beta (244 aa).

A helical membrane pass occupies residues 7–23 (IIACLLVIGTTIALIAV). Residues 45-53 (GPQNSGKTS), 66-69 (TVVS), glycine 90, and 154-157 (NKSE) contribute to the GTP site.

The protein belongs to the SRP receptor beta subunit family. Heterodimer of an alpha and a beta chain.

Its subcellular location is the endoplasmic reticulum membrane. Functionally, component of the signal recognition particle (SRP) complex receptor (SR). Ensures, in conjunction with the SRP complex, the correct targeting of the nascent secretory proteins to the endoplasmic reticulum membrane system. May mediate the membrane association of SR. The polypeptide is Signal recognition particle receptor subunit beta (SRP102) (Saccharomyces cerevisiae (strain ATCC 204508 / S288c) (Baker's yeast)).